The chain runs to 506 residues: ATP synthase subunit alpha, chloroplastic (506 aa).

170 to 177 is an ATP binding site; it reads GDRQTGKT. Position 257 is a phosphothreonine (Thr-257).

The protein belongs to the ATPase alpha/beta chains family. As to quaternary structure, F-type ATPases have 2 components, CF(1) - the catalytic core - and CF(0) - the membrane proton channel. CF(1) has five subunits: alpha(3), beta(3), gamma(1), delta(1), epsilon(1). CF(0) has four main subunits: a, b, b' and c.

Its subcellular location is the plastid. It is found in the chloroplast thylakoid membrane. It catalyses the reaction ATP + H2O + 4 H(+)(in) = ADP + phosphate + 5 H(+)(out). In terms of biological role, produces ATP from ADP in the presence of a proton gradient across the membrane. The alpha chain is a regulatory subunit. In Olimarabidopsis pumila (Dwarf rocket), this protein is ATP synthase subunit alpha, chloroplastic.